Reading from the N-terminus, the 354-residue chain is ORC1-type DNA replication protein 9 (354 aa).

ATP is bound by residues 63–67, Tyr195, and Arg207; that span reads TGKTC.

The protein belongs to the CDC6/cdc18 family.

In terms of biological role, involved in regulation of DNA replication. The protein is ORC1-type DNA replication protein 9 (orc9-1) of Halobacterium salinarum (strain ATCC 700922 / JCM 11081 / NRC-1) (Halobacterium halobium).